Here is a 91-residue protein sequence, read N- to C-terminus: Hepcidin-2 (91 aa).

A signal peptide spans 1-24 (MKLSNVFLAAVVILTCVCVFQITA). A propeptide spanning residues 25-64 (VPFIQQVQDEHHVESEELQENQHLTEAEHRLTDPLVLFRT) is cleaved from the precursor. Disulfide bonds link Cys-73–Cys-89, Cys-76–Cys-79, Cys-77–Cys-85, and Cys-80–Cys-88.

Belongs to the hepcidin family.

The protein localises to the secreted. Functionally, seems to act as a signaling molecule involved in the maintenance of iron homeostasis. Seems to be required in conjunction with HFE to regulate both intestinal iron absorption and iron storage in macrophages. May also have antimicrobial activity. This Danio rerio (Zebrafish) protein is Hepcidin-2 (hamp2).